The chain runs to 397 residues: MQFKRLSDLIARNELKGKRVFIRADLNVPQDGKGNITEDTRIRASVPAIRQALQAGAAVMVTSHLGRPVEGEFKPADTLAPIAQRLSELLGQPVALKQDWVDGVDVAPGQVVLLENCRVNKGEKKNDDVLAKKIAALCDVYVNDAFGTAHRAEATTHGIAKYATVACAGPLLAAELDALGKALHQPASPLVAIVAGSKVSTKLTILKTLADKVDNLIVGGGIANTFMLAAGLKIGKSLAEADLVGDARAIMDMMAKRGASVPIPVDVVCAKEFSPTAIATVKDVADVTDDDMILDIGPKTADILAKQISQAGTIVWNGPVGVFEFDQFANGTKTLAHAIAESSGFSVAGGGDTLAAIAKYDIADKIGYISTGGGAFLEFLEGKTLPAVEILEQRATS.

Substrate-binding positions include 25–27 (DLN), Arg-41, 64–67 (HLGR), Arg-118, and Arg-151. ATP-binding positions include Lys-202, Glu-324, and 350–353 (GGDT).

The protein belongs to the phosphoglycerate kinase family. In terms of assembly, monomer.

The protein resides in the cytoplasm. It catalyses the reaction (2R)-3-phosphoglycerate + ATP = (2R)-3-phospho-glyceroyl phosphate + ADP. It participates in carbohydrate degradation; glycolysis; pyruvate from D-glyceraldehyde 3-phosphate: step 2/5. The protein is Phosphoglycerate kinase of Herminiimonas arsenicoxydans.